The following is a 493-amino-acid chain: BICD family-like cargo adapter 2 (493 aa).

2 coiled-coil regions span residues 56–275 and 365–431; these read ELGK…ELHM and MQHV…LLST.

Belongs to the BICDR family.

This chain is BICD family-like cargo adapter 2 (bicdl2), found in Xenopus laevis (African clawed frog).